A 485-amino-acid chain; its full sequence is Cysteine--tRNA ligase (485 aa).

Residue cysteine 29 participates in Zn(2+) binding. The 'HIGH' region signature appears at 31–41; that stretch reads ATVQGMPHVGH. A disordered region spans residues 174-198; the sequence is QRVEDMQDAPDADPRGKRDPHDFAL. Positions 185–197 are enriched in basic and acidic residues; the sequence is ADPRGKRDPHDFA. 3 residues coordinate Zn(2+): cysteine 227, histidine 252, and glutamate 256. Residues 283-287 carry the 'KMSKS' region motif; the sequence is KMSKS. Residue lysine 286 participates in ATP binding.

Belongs to the class-I aminoacyl-tRNA synthetase family. As to quaternary structure, monomer. It depends on Zn(2+) as a cofactor.

It localises to the cytoplasm. The catalysed reaction is tRNA(Cys) + L-cysteine + ATP = L-cysteinyl-tRNA(Cys) + AMP + diphosphate. The protein is Cysteine--tRNA ligase of Micrococcus luteus (strain ATCC 4698 / DSM 20030 / JCM 1464 / CCM 169 / CCUG 5858 / IAM 1056 / NBRC 3333 / NCIMB 9278 / NCTC 2665 / VKM Ac-2230) (Micrococcus lysodeikticus).